Reading from the N-terminus, the 394-residue chain is Elongation factor Tu (394 aa).

The 195-residue stretch at 10–204 folds into the tr-type G domain; the sequence is KPHVNIGTIG…AVDSYIPQPV (195 aa). Residues 19–26 form a G1 region; the sequence is GHVDHGKT. A GTP-binding site is contributed by 19–26; it reads GHVDHGKT. Thr26 lines the Mg(2+) pocket. Residues 60 to 64 form a G2 region; the sequence is GITIS. Residues 81–84 are G3; that stretch reads DCPG. GTP contacts are provided by residues 81 to 85 and 136 to 139; these read DCPGH and NKVD. Residues 136–139 are G4; sequence NKVD. Positions 174–176 are G5; it reads SAL.

This sequence belongs to the TRAFAC class translation factor GTPase superfamily. Classic translation factor GTPase family. EF-Tu/EF-1A subfamily. Monomer.

It is found in the cytoplasm. The enzyme catalyses GTP + H2O = GDP + phosphate + H(+). Its function is as follows. GTP hydrolase that promotes the GTP-dependent binding of aminoacyl-tRNA to the A-site of ribosomes during protein biosynthesis. The polypeptide is Elongation factor Tu (Rickettsia massiliae (strain Mtu5)).